Here is a 556-residue protein sequence, read N- to C-terminus: 2-succinyl-5-enolpyruvyl-6-hydroxy-3-cyclohexene-1-carboxylate synthase (556 aa).

It belongs to the TPP enzyme family. MenD subfamily. As to quaternary structure, homodimer. It depends on Mg(2+) as a cofactor. Requires Mn(2+) as cofactor. Thiamine diphosphate serves as cofactor.

The catalysed reaction is isochorismate + 2-oxoglutarate + H(+) = 5-enolpyruvoyl-6-hydroxy-2-succinyl-cyclohex-3-ene-1-carboxylate + CO2. The protein operates within quinol/quinone metabolism; 1,4-dihydroxy-2-naphthoate biosynthesis; 1,4-dihydroxy-2-naphthoate from chorismate: step 2/7. It functions in the pathway quinol/quinone metabolism; menaquinone biosynthesis. Its function is as follows. Catalyzes the thiamine diphosphate-dependent decarboxylation of 2-oxoglutarate and the subsequent addition of the resulting succinic semialdehyde-thiamine pyrophosphate anion to isochorismate to yield 2-succinyl-5-enolpyruvyl-6-hydroxy-3-cyclohexene-1-carboxylate (SEPHCHC). In Escherichia coli O8 (strain IAI1), this protein is 2-succinyl-5-enolpyruvyl-6-hydroxy-3-cyclohexene-1-carboxylate synthase.